Here is a 691-residue protein sequence, read N- to C-terminus: Solute carrier family 28 member 3 (691 aa).

Residues methionine 1 to glutamine 78 form a disordered region. The Cytoplasmic segment spans residues methionine 1–arginine 102. The segment covering asparagine 21–asparagine 30 has biased composition (low complexity). Residues threonine 31–valine 42 show a composition bias toward polar residues. The segment covering glutamine 43–glutamate 54 has biased composition (basic and acidic residues). The chain crosses the membrane as a helical span at residues histidine 103 to leucine 123. Over asparagine 124–alanine 128 the chain is Extracellular. Residues leucine 129 to alanine 149 traverse the membrane as a helical segment. Over lysine 150–leucine 173 the chain is Cytoplasmic. The chain crosses the membrane as a helical span at residues lysine 174–alanine 194. Residues lysine 195–glycine 197 are Extracellular-facing. Residues glutamine 198–lysine 219 traverse the membrane as a helical segment. The Cytoplasmic segment spans residues tyrosine 220–arginine 227. The helical transmembrane segment at proline 228–aspartate 247 threads the bilayer. Residues proline 248 to phenylalanine 284 lie on the Extracellular side of the membrane. The chain crosses the membrane as a helical span at residues alanine 285–leucine 305. Topologically, residues glycine 306 to glutamate 329 are cytoplasmic. Positions serine 330 to valine 348 form an intramembrane region, helical. Residues arginine 349 to histidine 361 are Cytoplasmic-facing. Residues alanine 362–valine 384 traverse the membrane as a helical segment. Topologically, residues proline 385–serine 386 are extracellular. Residues serine 387–tryptophan 408 traverse the membrane as a helical segment. Topologically, residues proline 409–serine 443 are cytoplasmic. Residues isoleucine 444–serine 469 form a helical membrane-spanning segment. The Extracellular portion of the chain corresponds to tryptophan 470–valine 507. The segment at residues alanine 508–serine 527 is an intramembrane region (helical). The Extracellular portion of the chain corresponds to lysine 528 to isoleucine 566. Residues glycine 567–threonine 577 traverse the membrane as a helical segment. Topologically, residues serine 578–glycine 590 are cytoplasmic. Residues alanine 591–serine 613 traverse the membrane as a helical segment. The Extracellular portion of the chain corresponds to serine 614–phenylalanine 691.

The protein belongs to the concentrative nucleoside transporter (CNT) (TC 2.A.41) family. As to quaternary structure, homotrimer. In terms of tissue distribution, expressed in pancreas, bone marrow, trachea, mammary gland, liver, prostate, and regions of intestine, brain, lung, placenta, testis, kidney, and heart.

It localises to the cell membrane. It is found in the endoplasmic reticulum membrane. The catalysed reaction is thymidine(out) + 2 Na(+)(out) = thymidine(in) + 2 Na(+)(in). It catalyses the reaction cytidine(out) + 2 Na(+)(out) = cytidine(in) + 2 Na(+)(in). The enzyme catalyses uridine(out) + 2 Na(+)(out) = uridine(in) + 2 Na(+)(in). It carries out the reaction adenosine(out) + 2 Na(+)(out) = adenosine(in) + 2 Na(+)(in). The catalysed reaction is guanosine(out) + 2 Na(+)(out) = guanosine(in) + 2 Na(+)(in). It catalyses the reaction inosine(out) + 2 Na(+)(out) = inosine(in) + 2 Na(+)(in). Its function is as follows. Sodium-dependent, pyrimidine- and purine-selective. Involved in the homeostasis of endogenous nucleosides. Exhibits the transport characteristics of the nucleoside transport system cib or N3 subtype (N3/cib) (with marked transport of both thymidine and inosine). Employs a 2:1 sodium/nucleoside ratio. Transports uridine. Also able to transport gemcitabine, 3'-azido-3'-deoxythymidine (AZT), ribavirin and 3-deazauridine. This Homo sapiens (Human) protein is Solute carrier family 28 member 3 (SLC28A3).